Reading from the N-terminus, the 391-residue chain is Putative 8-amino-7-oxononanoate synthase (391 aa).

Residues Arg-22 and His-135 each coordinate substrate. Pyridoxal 5'-phosphate contacts are provided by residues Ser-183, 208–211 (DDAH), and 239–242 (TLSK). The residue at position 242 (Lys-242) is an N6-(pyridoxal phosphate)lysine. Thr-358 provides a ligand contact to substrate.

This sequence belongs to the class-II pyridoxal-phosphate-dependent aminotransferase family. BioF subfamily. In terms of assembly, homodimer. The cofactor is pyridoxal 5'-phosphate.

It catalyses the reaction 6-carboxyhexanoyl-[ACP] + L-alanine + H(+) = (8S)-8-amino-7-oxononanoate + holo-[ACP] + CO2. It participates in cofactor biosynthesis; biotin biosynthesis. Functionally, catalyzes the decarboxylative condensation of pimeloyl-[acyl-carrier protein] and L-alanine to produce 8-amino-7-oxononanoate (AON), [acyl-carrier protein], and carbon dioxide. In Thermosynechococcus vestitus (strain NIES-2133 / IAM M-273 / BP-1), this protein is Putative 8-amino-7-oxononanoate synthase (bioF).